A 465-amino-acid chain; its full sequence is 2-methylcitrate synthase, mitochondrial (465 aa).

Residues Arg72 and Lys190 each coordinate CoA. His265 serves as a coordination point for oxaloacetate. Leu300 provides a ligand contact to CoA. Residue His301 is part of the active site. Positions 342, 344, and 345 each coordinate CoA. Oxaloacetate-binding residues include His347 and Arg356. The active site involves His347. CoA contacts are provided by Thr394, Lys395, and Asn400. Asp402 is a catalytic residue. Oxaloacetate is bound by residues Arg428 and Arg448.

It belongs to the citrate synthase family. As to quaternary structure, homodimer.

The protein localises to the mitochondrion matrix. The catalysed reaction is propanoyl-CoA + oxaloacetate + H2O = (2S,3S)-2-methylcitrate + CoA + H(+). It carries out the reaction oxaloacetate + acetyl-CoA + H2O = citrate + CoA + H(+). The protein operates within organic acid metabolism; propanoate degradation. With respect to regulation, activity is inhibited by p-chloromercuribenzoate (pCMB), monoiodoacetamide, H(2)O(2), ATP, ADP, NADH, NADPH, Hg(2+) and Zn(2+). Its function is as follows. Component of the methylcitrate cycle that catalyzes the synthesis of (2S,3S)-2-methylcitrate from propionyl-CoA and oxaloacetate. Plays an important role in detoxification of propionyl-CoA, an inhibitor of both primary and secondary metabolism. Also has citrate synthase activity using as substrates acetyl-CoA and oxaloacetate. The sequence is that of 2-methylcitrate synthase, mitochondrial from Yarrowia lipolytica (strain CLIB 122 / E 150) (Yeast).